Consider the following 359-residue polypeptide: Peptide chain release factor 1 (359 aa).

Glutamine 238 is subject to N5-methylglutamine.

This sequence belongs to the prokaryotic/mitochondrial release factor family. In terms of processing, methylated by PrmC. Methylation increases the termination efficiency of RF1.

Its subcellular location is the cytoplasm. Its function is as follows. Peptide chain release factor 1 directs the termination of translation in response to the peptide chain termination codons UAG and UAA. This is Peptide chain release factor 1 from Mycoplasmopsis pulmonis (strain UAB CTIP) (Mycoplasma pulmonis).